The primary structure comprises 392 residues: GTPase Obg (392 aa).

The 159-residue stretch at 1–159 folds into the Obg domain; it reads MKFVDEATIK…RELRLELLLL (159 aa). The 174-residue stretch at 160-333 folds into the OBG-type G domain; the sequence is ADVGMLGLPN…VCNELSDFMD (174 aa). Residues 166 to 173, 191 to 195, 213 to 216, 283 to 286, and 314 to 316 contribute to the GTP site; these read GLPNAGKS, FTTLI, DIPG, NKTD, and AAV. Residues Ser173 and Thr193 each contribute to the Mg(2+) site. The interval 364 to 392 is disordered; the sequence is GKNVVTEDGDDDDDWDDEEDDGHVIYARD. Over residues 370–384 the composition is skewed to acidic residues; it reads EDGDDDDDWDDEEDD.

This sequence belongs to the TRAFAC class OBG-HflX-like GTPase superfamily. OBG GTPase family. Monomer. It depends on Mg(2+) as a cofactor.

It is found in the cytoplasm. An essential GTPase which binds GTP, GDP and possibly (p)ppGpp with moderate affinity, with high nucleotide exchange rates and a fairly low GTP hydrolysis rate. Plays a role in control of the cell cycle, stress response, ribosome biogenesis and in those bacteria that undergo differentiation, in morphogenesis control. The protein is GTPase Obg of Aliivibrio salmonicida (strain LFI1238) (Vibrio salmonicida (strain LFI1238)).